The chain runs to 671 residues: DNA ligase (671 aa).

Residues 32–36 (DAEYD), 81–82 (SL), and Glu-113 contribute to the NAD(+) site. Residue Lys-115 is the N6-AMP-lysine intermediate of the active site. The NAD(+) site is built by Arg-136, Glu-173, Lys-290, and Lys-314. The Zn(2+) site is built by Cys-408, Cys-411, Cys-426, and Cys-432. The 79-residue stretch at 593 to 671 (EIDSPFAGKT…EAEMLRLLGS (79 aa)) folds into the BRCT domain.

It belongs to the NAD-dependent DNA ligase family. LigA subfamily. It depends on Mg(2+) as a cofactor. The cofactor is Mn(2+).

The enzyme catalyses NAD(+) + (deoxyribonucleotide)n-3'-hydroxyl + 5'-phospho-(deoxyribonucleotide)m = (deoxyribonucleotide)n+m + AMP + beta-nicotinamide D-nucleotide.. Functionally, DNA ligase that catalyzes the formation of phosphodiester linkages between 5'-phosphoryl and 3'-hydroxyl groups in double-stranded DNA using NAD as a coenzyme and as the energy source for the reaction. It is essential for DNA replication and repair of damaged DNA. This Shigella boydii serotype 4 (strain Sb227) protein is DNA ligase.